Consider the following 241-residue polypeptide: MIVGVLVAAATPIISSASATPANIAGMVVFIDPGHNGANDASIGRQVPTGRGGTKNCQASGTSTNSGYPEHTFTWETGLRLRAALNALGVRTALSRGNDNALGPCVDERANMANALRPNAIVSLHADGGPASGRGFHVNYSAPPLNAIQAGPSVQFARIMRDQLQASGIPKANYIGQDGLYGRSDLAGLNLAQYPSILVELGNMKNPADSALMESAEGRQKYANALVRGVAGFLATQGQAR.

Positions 1-24 (MIVGVLVAAATPIISSASATPANI) are cleaved as a signal peptide. Positions 29 to 230 (VFIDPGHNGA…KYANALVRGV (202 aa)) constitute a MurNAc-LAA domain. Histidine 35 serves as a coordination point for Zn(2+). The segment at 45 to 69 (RQVPTGRGGTKNCQASGTSTNSGYP) is disordered. Over residues 55–67 (KNCQASGTSTNSG) the composition is skewed to polar residues. A disulfide bridge links cysteine 57 with cysteine 105. The Zn(2+) site is built by glutamate 70 and histidine 125. Glutamate 200 (proton donor/acceptor) is an active-site residue.

The protein belongs to the N-acetylmuramoyl-L-alanine amidase 3 family. In terms of assembly, monomer. Zn(2+) is required as a cofactor.

It is found in the periplasm. The catalysed reaction is Hydrolyzes the link between N-acetylmuramoyl residues and L-amino acid residues in certain cell-wall glycopeptides.. The protein operates within cell wall degradation; peptidoglycan degradation. With respect to regulation, the structure reveals a short flexible hairpin turn that partially occludes the active site and may be involved in autoregulation. Its function is as follows. Cell-wall hydrolase that hydrolyzes the amide bond between N-acetylmuramic acid and L-alanine in cell-wall glycopeptides. Is able to hydrolyze the cell walls of several bacterial species (i.e. Paenibacillus sp., B.avium, E.coli DH5alpha, E.aerogenes, L.acidophilus, B.thuringiensis, B.pumilus, B.subtilis and E.coli W3110), thereby showing that it is a cell-wall hydrolase with broad-spectrum activity. May have a role in peptidoglycan fragment recycling. This Mycobacterium tuberculosis (strain ATCC 25618 / H37Rv) protein is N-acetylmuramoyl-L-alanine amidase Rv3717.